The primary structure comprises 467 residues: Ankyrin repeat and SOCS box protein 10 (467 aa).

ANK repeat units follow at residues 115–144 (ELTTPLHVAASRGHTEVLRLLLRRRARPDS), 147–176 (GGRTALHEACAAGHTACVHVLLVAGADPNI), 180–209 (DGKRPLHLCRGPGTLECAELLLRFGARVDG), 214–243 (EEETPLHVAARLGHVELADLLLRRGACPDA), 247–289 (EGWT…DADA), 293–322 (DKQRPLHLACRRGHAAVVELLLSCGVSANT), and 326–361 (GGHTPLHCALQGPAAALAQSPEHVVRALLNHGAVRV). In terms of domain architecture, SOCS box spans 412-464 (YSSLFALVRQPRSLQHLSRCALRSHLEGSLPQALPRLPLPPRLLRYLQLDFEG).

Belongs to the ankyrin SOCS box (ASB) family. Expressed in the eye. The highest expression is observed in the iris, with moderate levels in the trabecular meshwork (TM), the lamina, and the optic nerve; slightly lower levels in the ciliary body, retina, and choroid; and very low levels in the lens.

The protein localises to the cytoplasm. It localises to the nucleus. It participates in protein modification; protein ubiquitination. Functionally, may be a substrate-recognition component of a SCF-like ECS (Elongin-Cullin-SOCS-box protein) E3 ubiquitin-protein ligase complex which mediates the ubiquitination and subsequent proteasomal degradation of target proteins. The sequence is that of Ankyrin repeat and SOCS box protein 10 (ASB10) from Homo sapiens (Human).